We begin with the raw amino-acid sequence, 395 residues long: Thyrotropin-releasing hormone receptor (395 aa).

The Extracellular portion of the chain corresponds to methionine 1–threonine 30. Asparagine 3 and asparagine 10 each carry an N-linked (GlcNAc...) asparagine glycan. Residues isoleucine 31–leucine 53 traverse the membrane as a helical segment. Residues arginine 54 to asparagine 63 lie on the Cytoplasmic side of the membrane. The chain crosses the membrane as a helical span at residues cysteine 64 to isoleucine 85. At threonine 86–leucine 101 the chain is on the extracellular side. The cysteines at positions 100 and 181 are disulfide-linked. The helical transmembrane segment at cysteine 102 to isoleucine 123 threads the bilayer. The Cytoplasmic segment spans residues glutamate 124–lysine 146. Residues isoleucine 147–isoleucine 170 form a helical membrane-spanning segment. The Extracellular segment spans residues alanine 171–methionine 195. A helical transmembrane segment spans residues methionine 196 to alanine 217. The Cytoplasmic portion of the chain corresponds to arginine 218–lysine 268. Residues methionine 269–valine 290 form a helical membrane-spanning segment. Over asparagine 291–phenylalanine 298 the chain is Extracellular. A helical membrane pass occupies residues glutamine 299 to isoleucine 321. At tyrosine 322–alanine 395 the chain is on the cytoplasmic side.

Belongs to the G-protein coupled receptor 1 family.

It is found in the cell membrane. Its function is as follows. Receptor for thyrotropin-releasing hormone (TRH). Upon ligand binding, this G-protein-coupled receptor triggers activation of the phosphatidylinositol (IP3)-calcium-protein kinase C (PKC) pathway. The polypeptide is Thyrotropin-releasing hormone receptor (TRHR) (Gallus gallus (Chicken)).